We begin with the raw amino-acid sequence, 98 residues long: Peptide YY (98 aa).

An N-terminal signal peptide occupies residues methionine 1 to alanine 28. A Phosphoserine modification is found at serine 41. Tyrosine 64 is modified (tyrosine amide). Positions aspartate 68 to tryptophan 98 are excised as a propeptide.

The protein belongs to the NPY family. The peptide YY form is cleaved at Pro-30 by the prolyl endopeptidase FAP (seprase) activity (in vitro) to generate peptide YY(3-36).

The protein localises to the secreted. Functionally, this gut peptide inhibits exocrine pancreatic secretion, has a vasoconstrictory action and inhibitis jejunal and colonic mobility. The sequence is that of Peptide YY (Pyy) from Mus musculus (Mouse).